Reading from the N-terminus, the 710-residue chain is Chloride channel protein CLC-e (710 aa).

The next 12 membrane-spanning stretches (helical) occupy residues 74-94, 122-142, 164-184, 193-213, 222-242, 261-281, 296-316, 340-360, 379-399, 412-432, 451-471, and 472-492; these read ELAI…VVLF, IGSN…VVSI, VKAV…LGTG, SVEI…KSPQ, GSAA…FFAV, TTSM…IGLG, PGEL…SLAL, VFPV…PEVL, GLSA…TAWC, SLFI…LALA, GLVG…TAVL, and LLFE…AVGM. Positions 500-534 are disordered; the sequence is QSKRQETRETKETRKRKSQEAVQSLTSSDDESSTN. Basic and acidic residues predominate over residues 502 to 511; the sequence is KRQETRETKE. The span at 520-534 shows a compositional bias: polar residues; that stretch reads AVQSLTSSDDESSTN. 2 consecutive CBS domains span residues 565-624 and 640-702; these read MRTR…GNNR and KCKV…ATRM. A helical membrane pass occupies residues 667 to 687; it reads HVAVVSGSIDAPRIHPVGVLD.

The protein belongs to the chloride channel (TC 2.A.49) family. As to quaternary structure, homodimer.

The protein resides in the membrane. It carries out the reaction 2 chloride(in) + H(+)(out) = 2 chloride(out) + H(+)(in). Voltage-gated thylakoid chloride (Cl) channel/transporter involved in chloride homeostasis after transition from light to dark. Influences chloroplast ultrastructure and subsequent photosynthetic electron transport. During photosynthetic response on transition from dark to low light, involved in a sequential mechanism of adaptation; VCCN1 and CLCe first trigger the activation of photoprotection, which is later down-regulated by KEA3 to a low steady state, while adjusting electron transport. Regulates photosynthesis by a pH-independent mechanism likely involving Cl(-) homeostasis. The chain is Chloride channel protein CLC-e from Arabidopsis thaliana (Mouse-ear cress).